Reading from the N-terminus, the 108-residue chain is Nucleoid-associated protein BAV0915 (108 aa).

The protein belongs to the YbaB/EbfC family. Homodimer.

It localises to the cytoplasm. The protein localises to the nucleoid. In terms of biological role, binds to DNA and alters its conformation. May be involved in regulation of gene expression, nucleoid organization and DNA protection. The sequence is that of Nucleoid-associated protein BAV0915 from Bordetella avium (strain 197N).